Here is a 380-residue protein sequence, read N- to C-terminus: tRNA (guanine(26)-N(2))-dimethyltransferase (380 aa).

The 373-residue stretch at 2–374 folds into the Trm1 methyltransferase domain; the sequence is ITVNEGSVTI…AGIGEIEEVL (373 aa). Positions 35, 65, 83, 109, and 110 each coordinate S-adenosyl-L-methionine. Positions 242, 245, 261, and 264 each coordinate Zn(2+).

This sequence belongs to the class I-like SAM-binding methyltransferase superfamily. Trm1 family.

The catalysed reaction is guanosine(26) in tRNA + 2 S-adenosyl-L-methionine = N(2)-dimethylguanosine(26) in tRNA + 2 S-adenosyl-L-homocysteine + 2 H(+). Functionally, dimethylates a single guanine residue at position 26 of a number of tRNAs using S-adenosyl-L-methionine as donor of the methyl groups. The protein is tRNA (guanine(26)-N(2))-dimethyltransferase of Methanothermobacter thermautotrophicus (strain ATCC 29096 / DSM 1053 / JCM 10044 / NBRC 100330 / Delta H) (Methanobacterium thermoautotrophicum).